Consider the following 426-residue polypeptide: Protein arginine N-methyltransferase 2 (426 aa).

2 disordered regions span residues 65–88 (DEEE…GQES) and 155–175 (DEEM…AVAA). The span at 73-88 (NGVQTNGDRQTHGQES) shows a compositional bias: polar residues. The segment covering 155–168 (DEEMEEDGEQEQEQ) has biased composition (acidic residues). The RMT2 domain maps to 207 to 426 (PSVTSSRYLN…YRLPLCKYMD (220 aa)). S-adenosyl-L-methionine contacts are provided by residues Tyr-214, Met-243, 263 to 268 (HGMGIV), 284 to 286 (EAH), 311 to 312 (WQ), and Asp-331.

This sequence belongs to the class I-like SAM-binding methyltransferase superfamily. RMT2 methyltransferase family. Monomer.

Its subcellular location is the cytoplasm. The protein resides in the nucleus. In terms of biological role, S-adenosyl-L-methionine-dependent protein-arginine N-methyltransferase that methylates the delta-nitrogen atom of arginine residues to form N5-methylarginine (type IV) in target proteins. Monomethylates ribosomal protein L12. The protein is Protein arginine N-methyltransferase 2 of Emericella nidulans (strain FGSC A4 / ATCC 38163 / CBS 112.46 / NRRL 194 / M139) (Aspergillus nidulans).